The chain runs to 156 residues: Small ribosomal subunit protein uS7 (156 aa).

It belongs to the universal ribosomal protein uS7 family. As to quaternary structure, part of the 30S ribosomal subunit. Contacts proteins S9 and S11.

Its function is as follows. One of the primary rRNA binding proteins, it binds directly to 16S rRNA where it nucleates assembly of the head domain of the 30S subunit. Is located at the subunit interface close to the decoding center, probably blocks exit of the E-site tRNA. This Rhodococcus erythropolis (strain PR4 / NBRC 100887) protein is Small ribosomal subunit protein uS7.